The sequence spans 574 residues: Serine/threonine-protein kinase fray1 (574 aa).

The span at 24-41 shows a compositional bias: basic and acidic residues; it reads NHHDLPDSDSDSSSREEE. The interval 24–64 is disordered; sequence NHHDLPDSDSDSSSREEELMNSSGGGNGKEPIGEKKKLPSH. A Protein kinase domain is found at 97-357; the sequence is YNLIEPIGEG…ASKLLEHKVF (261 aa). Residues 103–111 and K126 each bind ATP; that span reads IGEGTEGRV. D221 (proton acceptor) is an active-site residue. The residue at position 256 (T256) is a Phosphothreonine; by autocatalysis. 3 disordered regions span residues 381–447, 462–514, and 532–554; these read YRES…LVNM, LSSG…PEKE, and FGSP…HEHH. Composition is skewed to low complexity over residues 386-403, 418-441, and 462-475; these read SPAS…PSSP, KNIK…NLSN, and LSSG…SSDL. Positions 478–491 are enriched in basic residues; the sequence is GHLHKIGTPKKKHS. Residues 492–506 show a composition bias toward low complexity; it reads PSGSIGDSHGSISPP. Residues 536-553 show a composition bias toward basic and acidic residues; sequence KEGDHNHQHHKSEGDHEH.

Belongs to the protein kinase superfamily. STE Ser/Thr protein kinase family. STE20 subfamily. The cofactor is Mn(2+). Undergoes autophosphorylation in the catalytic domain.

It carries out the reaction L-seryl-[protein] + ATP = O-phospho-L-seryl-[protein] + ADP + H(+). The catalysed reaction is L-threonyl-[protein] + ATP = O-phospho-L-threonyl-[protein] + ADP + H(+). The protein is Serine/threonine-protein kinase fray1 of Dictyostelium discoideum (Social amoeba).